Here is a 385-residue protein sequence, read N- to C-terminus: 3-dehydroquinate synthase (385 aa).

Residues 122–126 (GVIGD), 146–147 (TT), K159, and K168 contribute to the NAD(+) site. 3 residues coordinate Zn(2+): E201, H264, and H282.

Belongs to the sugar phosphate cyclases superfamily. Dehydroquinate synthase family. It depends on Co(2+) as a cofactor. Zn(2+) serves as cofactor. Requires NAD(+) as cofactor.

The protein localises to the cytoplasm. It catalyses the reaction 7-phospho-2-dehydro-3-deoxy-D-arabino-heptonate = 3-dehydroquinate + phosphate. The protein operates within metabolic intermediate biosynthesis; chorismate biosynthesis; chorismate from D-erythrose 4-phosphate and phosphoenolpyruvate: step 2/7. Catalyzes the conversion of 3-deoxy-D-arabino-heptulosonate 7-phosphate (DAHP) to dehydroquinate (DHQ). This chain is 3-dehydroquinate synthase, found in Rhodospirillum rubrum (strain ATCC 11170 / ATH 1.1.1 / DSM 467 / LMG 4362 / NCIMB 8255 / S1).